The following is a 322-amino-acid chain: MARSRLPATSLRKPWKLDRQKLPSPDSGHSLLCGWSPGGKARPAGNTGAWAPAEQFFPASNRTREGGGLWPPLPLQSSPAAPTMLDSSAAEQVTRLTLKLLGQKLEQERQNVEGGPEGLHLEPGNEDRPDDALQTALKRRRDLLQRLREQHLLDELSRAQAWSGPSRGALGSALPPELPPTGILPTASPSPLAPDPPRIILPTVPQPPATIIQQLPQQPLIAQIPPPQAFPTQRSGSIKEDMVELLLLQNAQVHQLVLQNWMLKALPPALQDPPHVPPRVPRAARPRLPAVHHHHHHHHAVWPPGAATVLQPAPSLWTPGPP.

2 disordered regions span residues 1-51 (MARS…GAWA) and 107-130 (QERQNVEGGPEGLHLEPGNEDRPD). Residues 119–130 (LHLEPGNEDRPD) are compositionally biased toward basic and acidic residues.

In terms of tissue distribution, expressed in skin and fetal lung.

This is an uncharacterized protein from Homo sapiens (Human).